Reading from the N-terminus, the 144-residue chain is uncharacterized protein (144 aa).

4 consecutive transmembrane segments (helical) span residues 7–29, 51–73, 85–107, and 122–139; these read FPASVLQIALALFLLASGARDLV, VAIGVLTLAVSLCCLTAGFFLLV, AVLALFVVLWALNMVLVDVVGAF, and HLHHTAVDLLVLGALIFV.

The protein localises to the cell membrane. This is an uncharacterized protein from Treponema pallidum (strain Nichols).